The primary structure comprises 213 residues: Holliday junction branch migration complex subunit RuvA (213 aa).

Residues 1–69 form a domain I region; sequence MISYLKGIVA…EEIPLLYGFS (69 aa). A domain II region spans residues 70–148; sequence SPAERDLFRH…EWRKSAGFFV (79 aa). Positions 149 to 158 are flexible linker; that stretch reads ATEGPAPGIL. Residues 158–213 are domain III; it reads LEEVQMTLFALGYTAHEVSHALHVVSEDIGLPKDAYVEDWIKQAIAHLSSSEQVSH.

It belongs to the RuvA family. In terms of assembly, homotetramer. Forms an RuvA(8)-RuvB(12)-Holliday junction (HJ) complex. HJ DNA is sandwiched between 2 RuvA tetramers; dsDNA enters through RuvA and exits via RuvB. An RuvB hexamer assembles on each DNA strand where it exits the tetramer. Each RuvB hexamer is contacted by two RuvA subunits (via domain III) on 2 adjacent RuvB subunits; this complex drives branch migration. In the full resolvosome a probable DNA-RuvA(4)-RuvB(12)-RuvC(2) complex forms which resolves the HJ.

It localises to the cytoplasm. In terms of biological role, the RuvA-RuvB-RuvC complex processes Holliday junction (HJ) DNA during genetic recombination and DNA repair, while the RuvA-RuvB complex plays an important role in the rescue of blocked DNA replication forks via replication fork reversal (RFR). RuvA specifically binds to HJ cruciform DNA, conferring on it an open structure. The RuvB hexamer acts as an ATP-dependent pump, pulling dsDNA into and through the RuvAB complex. HJ branch migration allows RuvC to scan DNA until it finds its consensus sequence, where it cleaves and resolves the cruciform DNA. This is Holliday junction branch migration complex subunit RuvA from Nostoc sp. (strain PCC 7120 / SAG 25.82 / UTEX 2576).